We begin with the raw amino-acid sequence, 622 residues long: Chaperone protein HscA homolog (622 aa).

The protein belongs to the heat shock protein 70 family.

Its function is as follows. Chaperone involved in the maturation of iron-sulfur cluster-containing proteins. Has a low intrinsic ATPase activity which is markedly stimulated by HscB. This is Chaperone protein HscA homolog from Azoarcus sp. (strain BH72).